The following is a 61-amino-acid chain: Small ribosomal subunit protein uS14 (61 aa).

Zn(2+) contacts are provided by cysteine 24, cysteine 27, cysteine 40, and cysteine 43.

It belongs to the universal ribosomal protein uS14 family. Zinc-binding uS14 subfamily. As to quaternary structure, part of the 30S ribosomal subunit. Contacts proteins S3 and S10. The cofactor is Zn(2+).

Functionally, binds 16S rRNA, required for the assembly of 30S particles and may also be responsible for determining the conformation of the 16S rRNA at the A site. The protein is Small ribosomal subunit protein uS14 of Campylobacter curvus (strain 525.92).